A 415-amino-acid polypeptide reads, in one-letter code: Gamma-glutamyl phosphate reductase (415 aa).

Belongs to the gamma-glutamyl phosphate reductase family.

It localises to the cytoplasm. It catalyses the reaction L-glutamate 5-semialdehyde + phosphate + NADP(+) = L-glutamyl 5-phosphate + NADPH + H(+). Its pathway is amino-acid biosynthesis; L-proline biosynthesis; L-glutamate 5-semialdehyde from L-glutamate: step 2/2. In terms of biological role, catalyzes the NADPH-dependent reduction of L-glutamate 5-phosphate into L-glutamate 5-semialdehyde and phosphate. The product spontaneously undergoes cyclization to form 1-pyrroline-5-carboxylate. The protein is Gamma-glutamyl phosphate reductase of Bacillus cereus (strain AH187).